The following is a 217-amino-acid chain: 3,4-dihydroxy-2-butanone 4-phosphate synthase (217 aa).

D-ribulose 5-phosphate-binding positions include 37–38 (RE), Asp42, 150–154 (RGGHT), and Glu174. Glu38 is a binding site for Mg(2+). Mg(2+) is bound at residue His153.

Belongs to the DHBP synthase family. In terms of assembly, homodimer. Mg(2+) is required as a cofactor. Requires Mn(2+) as cofactor.

It catalyses the reaction D-ribulose 5-phosphate = (2S)-2-hydroxy-3-oxobutyl phosphate + formate + H(+). The protein operates within cofactor biosynthesis; riboflavin biosynthesis; 2-hydroxy-3-oxobutyl phosphate from D-ribulose 5-phosphate: step 1/1. Catalyzes the conversion of D-ribulose 5-phosphate to formate and 3,4-dihydroxy-2-butanone 4-phosphate. The polypeptide is 3,4-dihydroxy-2-butanone 4-phosphate synthase (Klebsiella pneumoniae subsp. pneumoniae (strain ATCC 700721 / MGH 78578)).